A 468-amino-acid chain; its full sequence is ATP synthase subunit beta (468 aa).

Gly-148–Thr-155 contacts ATP.

Belongs to the ATPase alpha/beta chains family. As to quaternary structure, F-type ATPases have 2 components, CF(1) - the catalytic core - and CF(0) - the membrane proton channel. CF(1) has five subunits: alpha(3), beta(3), gamma(1), delta(1), epsilon(1). CF(0) has three main subunits: a(1), b(2) and c(9-12). The alpha and beta chains form an alternating ring which encloses part of the gamma chain. CF(1) is attached to CF(0) by a central stalk formed by the gamma and epsilon chains, while a peripheral stalk is formed by the delta and b chains.

Its subcellular location is the cell inner membrane. It carries out the reaction ATP + H2O + 4 H(+)(in) = ADP + phosphate + 5 H(+)(out). Produces ATP from ADP in the presence of a proton gradient across the membrane. The catalytic sites are hosted primarily by the beta subunits. This is ATP synthase subunit beta from Xanthomonas campestris pv. campestris (strain B100).